A 108-amino-acid polypeptide reads, in one-letter code: Putative double-stranded DNA mimic protein PBPRA1522 (108 aa).

Belongs to the putative dsDNA mimic protein family.

In terms of biological role, may act as a double-stranded DNA (dsDNA) mimic. Probably regulates the activity of a dsDNA-binding protein. The sequence is that of Putative double-stranded DNA mimic protein PBPRA1522 from Photobacterium profundum (strain SS9).